A 551-amino-acid chain; its full sequence is Methionine--tRNA ligase (551 aa).

The 'HIGH' region motif lies at 12–22 (PYANGPLHFGH). Residues Cys-144, Cys-147, Cys-157, and Cys-160 each coordinate Zn(2+). A 'KMSKS' region motif is present at residues 330-334 (QFSKS). An ATP-binding site is contributed by Lys-333.

The protein belongs to the class-I aminoacyl-tRNA synthetase family. MetG type 1 subfamily. Monomer. The cofactor is Zn(2+).

The protein localises to the cytoplasm. The catalysed reaction is tRNA(Met) + L-methionine + ATP = L-methionyl-tRNA(Met) + AMP + diphosphate. Functionally, is required not only for elongation of protein synthesis but also for the initiation of all mRNA translation through initiator tRNA(fMet) aminoacylation. The protein is Methionine--tRNA ligase (metG) of Chlamydia pneumoniae (Chlamydophila pneumoniae).